We begin with the raw amino-acid sequence, 183 residues long: Capsid protein (183 aa).

A disordered region spans residues 136-183 (NAPILSTLPETTVVRRRGRSPRRRTPSPRRRRSQSPRRRRSQSPASQC). The span at 149-176 (VRRRGRSPRRRTPSPRRRRSQSPRRRRS) shows a compositional bias: basic residues. A phosphoserine; by host mark is found at Ser-155, Ser-162, and Ser-170. Residues 155–161 (SPRRRTP) form a 1; half-length repeat. The 3 X 8 AA repeats of S-P-R-R-R-[PR]-S-Q stretch occupies residues 155 to 177 (SPRRRTPSPRRRRSQSPRRRRSQ). Positions 158-175 (RRTPSPRRRRSQSPRRRR) match the Bipartite nuclear localization signal motif. Repeat copies occupy residues 162 to 169 (SPRRRRSQ) and 170 to 177 (SPRRRRSQ). Residues 177 to 183 (QSPASQC) form an RNA binding region.

The protein belongs to the orthohepadnavirus core antigen family. In terms of assembly, homodimerizes, then multimerizes. Interacts with cytosol exposed regions of viral L glycoprotein present in the reticulum-to-Golgi compartment. Interacts with human FLNB. Phosphorylated form interacts with host importin alpha; this interaction depends on the exposure of the NLS, which itself depends upon genome maturation and/or phosphorylation of the capsid protein. Interacts with host NUP153. Phosphorylated by host SRPK1, SRPK2, and maybe protein kinase C or GAPDH. Phosphorylation is critical for pregenomic RNA packaging. Protein kinase C phosphorylation is stimulated by HBx protein and may play a role in transport of the viral genome to the nucleus at the late step during the viral replication cycle.

The protein localises to the virion. Its subcellular location is the host cytoplasm. In terms of biological role, self assembles to form an icosahedral capsid. Most capsids appear to be large particles with an icosahedral symmetry of T=4 and consist of 240 copies of capsid protein, though a fraction forms smaller T=3 particles consisting of 180 capsid proteins. Entering capsids are transported along microtubules to the nucleus. Phosphorylation of the capsid is thought to induce exposure of nuclear localization signal in the C-terminal portion of the capsid protein that allows binding to the nuclear pore complex via the importin (karyopherin-) alpha and beta. Capsids are imported in intact form through the nuclear pore into the nuclear basket, where it probably binds NUP153. Only capsids that contain the mature viral genome can release the viral DNA and capsid protein into the nucleoplasm. Immature capsids get stuck in the basket. Capsids encapsulate the pre-genomic RNA and the P protein. Pre-genomic RNA is reverse-transcribed into DNA while the capsid is still in the cytoplasm. The capsid can then either be directed to the nucleus, providing more genomes for transcription, or bud through the endoplasmic reticulum to provide new virions. The chain is Capsid protein from Pan troglodytes (Chimpanzee).